The primary structure comprises 183 residues: Beta-defensin 129 (183 aa).

The N-terminal stretch at M1 to T19 is a signal peptide. 3 disulfides stabilise this stretch: C27–C53, C34–C48, and C38–C54. The interval A142–Q183 is disordered. Pro residues predominate over residues S159–L170.

Belongs to the beta-defensin family.

Its subcellular location is the secreted. Functionally, has antibacterial activity. In Macaca fascicularis (Crab-eating macaque), this protein is Beta-defensin 129 (DEFB129).